Reading from the N-terminus, the 464-residue chain is Arylsulfatase (464 aa).

Residues 1–20 form the signal peptide; it reads MNKKAMAAAVSMILAGGAHA. 3 residues coordinate Ca(2+): Asp34, Asp35, and Ser72. The active-site Nucleophile is the Ser72. Ser72 carries the post-translational modification 3-oxoalanine (Ser). His134 is a catalytic residue. Ca(2+) is bound by residues Asp329 and Asn330.

Belongs to the sulfatase family. It depends on Ca(2+) as a cofactor. The conversion to 3-oxoalanine (also known as C-formylglycine, FGly), of a serine or cysteine residue in prokaryotes and of a cysteine residue in eukaryotes, is critical for catalytic activity.

It is found in the periplasm. It carries out the reaction an aryl sulfate + H2O = a phenol + sulfate + H(+). In terms of biological role, plays an important role in the mineralization of sulfates. This chain is Arylsulfatase (atsA), found in Klebsiella aerogenes (Enterobacter aerogenes).